The primary structure comprises 281 residues: Probable endonuclease 4 (281 aa).

Residues His69, His109, Glu145, Asp179, His182, His216, Asp229, His231, and Glu261 each coordinate Zn(2+).

Belongs to the AP endonuclease 2 family. Zn(2+) is required as a cofactor.

It catalyses the reaction Endonucleolytic cleavage to 5'-phosphooligonucleotide end-products.. Functionally, endonuclease IV plays a role in DNA repair. It cleaves phosphodiester bonds at apurinic or apyrimidinic (AP) sites, generating a 3'-hydroxyl group and a 5'-terminal sugar phosphate. This is Probable endonuclease 4 from Aeromonas salmonicida (strain A449).